The primary structure comprises 615 residues: Putative DNA ligase 205R (615 aa).

Residue K101 is the N6-AMP-lysine intermediate of the active site.

The protein belongs to the NAD-dependent DNA ligase family.

The catalysed reaction is NAD(+) + (deoxyribonucleotide)n-3'-hydroxyl + 5'-phospho-(deoxyribonucleotide)m = (deoxyribonucleotide)n+m + AMP + beta-nicotinamide D-nucleotide.. Catalyzes the formation of phosphodiester linkages between 5'-phosphoryl and 3'-hydroxyl groups in double-stranded DNA using NAD as a coenzyme and as the energy source for the reaction. This Invertebrate iridescent virus 6 (IIV-6) protein is Putative DNA ligase 205R.